A 478-amino-acid chain; its full sequence is MPEAWAPVRPETPPAPELLYWNAELADELGLDAGQTDKGELARLFSGADIPEGAQPIAQAYAGHQFGGLSPSLGDGRALLLGEVTDRNGQRRDIALKGSGQTPFSRRGDGKAAVGPMLRELIVGEAMQALGIPTTRALAVTTTGEPVYRERPLPGAVLTRVAASHLRVGTFQYFAIRGETAMLNKLADYTIARHYPQLAGRDGRHLALLAAVAERQAALIARWMHAGFIHGVMNTDNMALSGETIDYGPCAFMDAHYPGTVFSSIDHQGRYAYGNQPAIAQWNLARFAETLLPLISPDDPAAAVPAATEIVEGFEDLYQRRWLEQARRKLGLEGERDDDQALADDWLMLLAAHGVDHTLAWRYLADEAEGKGERLAALFPSPDALTPWLKQWHARHVPRTRRPPDIAAAMRRESPLYIPRNHLVEEALDAASERGDMGPTLKLLEALHQPFAERDGLDRYAQPAAAELAEGYRTFCGT.

Positions 74, 76, 77, 97, 109, 110, 160, and 167 each coordinate ATP. Asp-236 functions as the Proton acceptor in the catalytic mechanism. Asn-237 and Asp-246 together coordinate Mg(2+). Asp-246 lines the ATP pocket.

The protein belongs to the SELO family. The cofactor is Mg(2+). Mn(2+) serves as cofactor.

The enzyme catalyses L-seryl-[protein] + ATP = 3-O-(5'-adenylyl)-L-seryl-[protein] + diphosphate. It catalyses the reaction L-threonyl-[protein] + ATP = 3-O-(5'-adenylyl)-L-threonyl-[protein] + diphosphate. The catalysed reaction is L-tyrosyl-[protein] + ATP = O-(5'-adenylyl)-L-tyrosyl-[protein] + diphosphate. It carries out the reaction L-histidyl-[protein] + UTP = N(tele)-(5'-uridylyl)-L-histidyl-[protein] + diphosphate. The enzyme catalyses L-seryl-[protein] + UTP = O-(5'-uridylyl)-L-seryl-[protein] + diphosphate. It catalyses the reaction L-tyrosyl-[protein] + UTP = O-(5'-uridylyl)-L-tyrosyl-[protein] + diphosphate. Its function is as follows. Nucleotidyltransferase involved in the post-translational modification of proteins. It can catalyze the addition of adenosine monophosphate (AMP) or uridine monophosphate (UMP) to a protein, resulting in modifications known as AMPylation and UMPylation. In Chromobacterium violaceum (strain ATCC 12472 / DSM 30191 / JCM 1249 / CCUG 213 / NBRC 12614 / NCIMB 9131 / NCTC 9757 / MK), this protein is Protein nucleotidyltransferase YdiU.